A 488-amino-acid polypeptide reads, in one-letter code: Altronate oxidoreductase (488 aa).

Residue V18 to A29 participates in NAD(+) binding.

This sequence belongs to the mannitol dehydrogenase family. UxaB subfamily.

The enzyme catalyses D-altronate + NAD(+) = keto-D-tagaturonate + NADH + H(+). It functions in the pathway carbohydrate metabolism; pentose and glucuronate interconversion. The sequence is that of Altronate oxidoreductase from Pectobacterium carotovorum subsp. carotovorum (strain PC1).